Reading from the N-terminus, the 197-residue chain is Glycerol-3-phosphate acyltransferase (197 aa).

Transmembrane regions (helical) follow at residues 7 to 27, 56 to 76, 82 to 102, 116 to 136, and 157 to 177; these read PSIAALIGYAFGSIPFGLLLT, LAALTLVLDLVKGFVPVWIAW, DIGWAALGAVVGHCFPIWLGF, FGLGWGIGLAYAFVWLVMLAI, and YFGRPTFVPPLVIIAVIIIWL.

This sequence belongs to the PlsY family. As to quaternary structure, probably interacts with PlsX.

It is found in the cell inner membrane. The enzyme catalyses an acyl phosphate + sn-glycerol 3-phosphate = a 1-acyl-sn-glycero-3-phosphate + phosphate. It participates in lipid metabolism; phospholipid metabolism. Functionally, catalyzes the transfer of an acyl group from acyl-phosphate (acyl-PO(4)) to glycerol-3-phosphate (G3P) to form lysophosphatidic acid (LPA). This enzyme utilizes acyl-phosphate as fatty acyl donor, but not acyl-CoA or acyl-ACP. This Erythrobacter litoralis (strain HTCC2594) protein is Glycerol-3-phosphate acyltransferase.